Here is a 348-residue protein sequence, read N- to C-terminus: Dihydroorotase (348 aa).

Residues His17 and His19 each coordinate Zn(2+). Residues 19–21 (HLR) and Asn45 each bind substrate. Positions 103, 140, and 178 each coordinate Zn(2+). At Lys103 the chain carries N6-carboxylysine. Substrate is bound at residue His140. Residue Leu223 coordinates substrate. Position 251 (Asp251) interacts with Zn(2+). Asp251 is a catalytic residue. His255 and Ala267 together coordinate substrate.

The protein belongs to the metallo-dependent hydrolases superfamily. DHOase family. Class II DHOase subfamily. Homodimer. Zn(2+) serves as cofactor. The cofactor is Co(2+). Requires Mg(2+) as cofactor. It depends on Ni(2+) as a cofactor.

The catalysed reaction is (S)-dihydroorotate + H2O = N-carbamoyl-L-aspartate + H(+). It participates in pyrimidine metabolism; UMP biosynthesis via de novo pathway; (S)-dihydroorotate from bicarbonate: step 3/3. In terms of biological role, catalyzes the reversible cyclization of carbamoyl aspartate to dihydroorotate. The protein is Dihydroorotase of Klebsiella pneumoniae subsp. pneumoniae (strain ATCC 700721 / MGH 78578).